The sequence spans 621 residues: Uptake hydrogenase large subunit (621 aa).

Residues C75, C78, C600, and C603 each coordinate Ni(2+).

The protein belongs to the [NiFe]/[NiFeSe] hydrogenase large subunit family. In terms of assembly, heterodimer of a large and a small subunit. Ni(2+) serves as cofactor.

It localises to the cell membrane. It carries out the reaction H2 + A = AH2. This enzyme recycles the H(2) produced by nitrogenase to increase the production of ATP and to protect nitrogenase against inhibition or damage by O(2) under carbon- or phosphate-limited conditions. This is Uptake hydrogenase large subunit (hupL) from Alcaligenes hydrogenophilus.